The following is a 430-amino-acid chain: Enolase (430 aa).

(2R)-2-phosphoglycerate is bound at residue glutamine 167. The active-site Proton donor is the glutamate 209. Mg(2+) is bound by residues aspartate 246, glutamate 287, and aspartate 314. 3 residues coordinate (2R)-2-phosphoglycerate: lysine 339, arginine 368, and serine 369. Lysine 339 functions as the Proton acceptor in the catalytic mechanism.

It belongs to the enolase family. Requires Mg(2+) as cofactor.

It localises to the cytoplasm. It is found in the secreted. The protein resides in the cell surface. It carries out the reaction (2R)-2-phosphoglycerate = phosphoenolpyruvate + H2O. It participates in carbohydrate degradation; glycolysis; pyruvate from D-glyceraldehyde 3-phosphate: step 4/5. Catalyzes the reversible conversion of 2-phosphoglycerate (2-PG) into phosphoenolpyruvate (PEP). It is essential for the degradation of carbohydrates via glycolysis. The sequence is that of Enolase from Synechococcus sp. (strain ATCC 27144 / PCC 6301 / SAUG 1402/1) (Anacystis nidulans).